Reading from the N-terminus, the 399-residue chain is Glucosamine kinase (399 aa).

ATP-binding positions include K98, 149-151, and D156; that span reads EYL. D262 is a D-glucosamine binding site. Mg(2+) contacts are provided by Q267, D279, and D281. The short motif at 366–381 is the Substrate specificity determinant motif element; sequence QVLREIIYAARHLPRW. E370 serves as a coordination point for D-glucosamine.

It belongs to the actinobacterial glucosamine kinase family. As to quaternary structure, monomer. Mg(2+) serves as cofactor.

It carries out the reaction D-glucosamine + ATP = D-glucosamine 6-phosphate + ADP + H(+). In terms of biological role, catalyzes the ATP-dependent phosphorylation of D-glucosamine (GlcN) to D-glucosamine 6-phosphate. May be involved in the phosphorylation of acquired extracellular GlcN derived from the hydrolysis of chitosan, i.e., in the incorporation of exogenous GlcN into the bacterial GlcNAc metabolism. Is unable to phosphorylate maltose. This Mycolicibacterium smegmatis (strain ATCC 700084 / mc(2)155) (Mycobacterium smegmatis) protein is Glucosamine kinase.